The chain runs to 364 residues: Alanine racemase (364 aa).

Lys-35 (proton acceptor; specific for D-alanine) is an active-site residue. Residue Lys-35 is modified to N6-(pyridoxal phosphate)lysine. Arg-131 is a binding site for substrate. Residue Tyr-256 is the Proton acceptor; specific for L-alanine of the active site. Met-304 serves as a coordination point for substrate.

It belongs to the alanine racemase family. Pyridoxal 5'-phosphate is required as a cofactor.

The enzyme catalyses L-alanine = D-alanine. It functions in the pathway amino-acid biosynthesis; D-alanine biosynthesis; D-alanine from L-alanine: step 1/1. Functionally, catalyzes the interconversion of L-alanine and D-alanine. May also act on other amino acids. The sequence is that of Alanine racemase (alr) from Chromohalobacter salexigens (strain ATCC BAA-138 / DSM 3043 / CIP 106854 / NCIMB 13768 / 1H11).